The sequence spans 382 residues: Sphingoid long-chain base transporter RSB1 (382 aa).

The Extracellular segment spans residues 1–34 (MSNATNNTLGSLLPQLEAAANSNSLYGGMVPNLR). Residues asparagine 3 and asparagine 6 are each glycosylated (N-linked (GlcNAc...) asparagine). Residues 35–55 (FNITMIVIWGILLTIHVVQLL) traverse the membrane as a helical segment. The Cytoplasmic portion of the chain corresponds to 56 to 57 (MR). Residues 58 to 78 (QYWFSIAFICTGILEVLGFIG) traverse the membrane as a helical segment. Over 79 to 90 (RTWSHSNVADMD) the chain is Extracellular. The chain crosses the membrane as a helical span at residues 91-111 (AFLLNMICLTIAPVFTMGGIY). Residues 112-135 (YQLAKLIEVYGHRFSLLPSPMAYS) are Cytoplasmic-facing. A helical membrane pass occupies residues 136-156 (FIFICSDIVSLVVQAVGGGLC). The Extracellular segment spans residues 157–171 (GVAVTDGTSTTTGNH). Residues 172–192 (VFIAGLAIQVASMAIFLMLWF) traverse the membrane as a helical segment. The Cytoplasmic portion of the chain corresponds to 193–241 (HFLFRIYISVRWEHINSRPISLSLLKISQTEVDYLYREKFHFLRLEPKR). Residues 242 to 262 (WVFHYFNLAITVAVLTIFTRC) form a helical membrane-spanning segment. Residues 263-281 (CYRLAELVVGWDGYLITHE) lie on the Extracellular side of the membrane. A helical membrane pass occupies residues 282 to 302 (WYFIILDALMMAIATVTLTIF). Residues 303–382 (HPGFAFKGRS…LFSSKKKAKL (80 aa)) lie on the Cytoplasmic side of the membrane.

It belongs to the lipid-translocating exporter (LTE) (TC 9.A.26.1) family.

It localises to the cell membrane. Its function is as follows. Catalyzes the ATP-dependent translocation of sphingoid long-chain bases (LCBs) from the cytoplasmic site toward the extracytoplasmic side of the membrane (flip-flop). Involved in the establishment of the functional lipid asymmetry of the plasma membrane. Regulates intracellular levels of LCBs, sphingolipid precursors that are growth inhibitory at increased levels. This is Sphingoid long-chain base transporter RSB1 (RSB1) from Saccharomyces cerevisiae (strain ATCC 204508 / S288c) (Baker's yeast).